The following is a 574-amino-acid chain: Ribonuclease Y (574 aa).

Residues 1 to 21 (MSLLDLVLLLLVLGLGGVLLL) traverse the membrane as a helical segment. The 64-residue stretch at 264-327 (AVTVVPIPSD…EIARMALEEL (64 aa)) folds into the KH domain. Residues 390–483 (VLKHSIQVAH…VAAADALSAA (94 aa)) form the HD domain.

Belongs to the RNase Y family.

Its subcellular location is the cell membrane. Endoribonuclease that initiates mRNA decay. The protein is Ribonuclease Y of Thermus thermophilus (strain ATCC BAA-163 / DSM 7039 / HB27).